Here is a 495-residue protein sequence, read N- to C-terminus: Syntaphilin (495 aa).

The tract at residues 1–74 (MAMSLQGSRR…HGIKPPTPEQ (74 aa)) is disordered. Low complexity predominate over residues 7 to 49 (GSRRASAGSRRRTSPPVSVRDAYGTSSLSSSSNSGSCKGSDSS). The stretch at 79–161 (LQQKEVCIRH…VKNNLIDKDK (83 aa)) forms a coiled coil. A disordered region spans residues 191–244 (VAKEEGTGESAGGSPARSLTRSSTYTKLSDPAVCGDRQPGDPSNTSAEDGADSG). Phosphoserine occurs at positions 200 and 204. Polar residues predominate over residues 207 to 217 (RSLTRSSTYTK). Position 214 is a phosphothreonine (threonine 214). The residue at position 219 (serine 219) is a Phosphoserine. Residue threonine 235 is modified to Phosphothreonine. A helical transmembrane segment spans residues 427–446 (YIVDLLAVVVPAVPTVAWLC).

Binds to STX1A. Interacts with DNM1; this interaction inhibits the binding of DNM1 to AMPH and DNM1-receptor-mediated endocytosis.

The protein localises to the membrane. The protein resides in the synapse. Its subcellular location is the synaptosome. In terms of biological role, inhibits SNARE complex formation by absorbing free STX1A. The sequence is that of Syntaphilin from Mus musculus (Mouse).